The primary structure comprises 101 residues: Small ribosomal subunit protein uS14A (101 aa).

Residues 32–71 (RRPGTPEPERNRAVEELRRQPRDASATRVRNRDSVDGRPR) are disordered. Composition is skewed to basic and acidic residues over residues 38–53 (EPER…RQPR) and 61–70 (RNRDSVDGRP).

It belongs to the universal ribosomal protein uS14 family. As to quaternary structure, part of the 30S ribosomal subunit. Contacts proteins S3 and S10.

Its function is as follows. Binds 16S rRNA, required for the assembly of 30S particles and may also be responsible for determining the conformation of the 16S rRNA at the A site. This Streptomyces griseus subsp. griseus (strain JCM 4626 / CBS 651.72 / NBRC 13350 / KCC S-0626 / ISP 5235) protein is Small ribosomal subunit protein uS14A.